The sequence spans 1855 residues: Unconventional myosin-Va (1855 aa).

At Ala2 the chain carries N-acetylalanine. Positions 8–60 (TKFARVWIPDPEEVWKSAELLKDYKPGDKVLLLHLEEGKDLEYHLDPKTKELP) constitute a Myosin N-terminal SH3-like domain. Positions 69–763 (VGENDLTALS…QVAYLEKLRA (695 aa)) constitute a Myosin motor domain. Residue 163–170 (GESGAGKT) participates in ATP binding. Residues 598 to 631 (AISPTSATSSGRTPLTRTPAKPTKGRPGQMAKEH) form a disordered region. Position 600 is a phosphoserine (Ser600). Positions 600–613 (SPTSATSSGRTPLT) are enriched in polar residues. The interval 643–665 (LHLLMETLNATTPHYVRCIKPND) is actin-binding. IQ domains follow at residues 766–788 (LRAACIRIQKTIRGWLLRKKYLR), 789–818 (MRKAAITMQRYVRGYQARCYAKFLRRTKAA), 814–836 (RTKAATIIQKYWRMYVVRRRYKI), 837–861 (RRAATIVLQSYLRGFLARNRYRKIL), 862–883 (REHKAVIIQKRVRGWLARTHYK), and 885–914 (SMHAIIYLQCCFRRMMAKRELKKLKIEARS). Coiled-coil stretches lie at residues 914 to 1237 (SVER…APEV) and 1338 to 1445 (VYEG…ELEV). Residue Thr1032 is modified to Phosphothreonine. Ser1452 and Ser1652 each carry phosphoserine. Positions 1534–1810 (TSTINSIKKV…IRTIQMRLRD (277 aa)) constitute a Dilute domain. Thr1760 carries the phosphothreonine modification.

This sequence belongs to the TRAFAC class myosin-kinesin ATPase superfamily. Myosin family. May be a homodimer, which associates with multiple calmodulin or myosin light chains. Interacts with RIPL2, the interaction is required for its role in dendrite formation. Interacts with MLPH. Interacts with SYTL4. Interacts with MYRIP. Interacts with RAB10; mediates the transport to the plasma membrane of SLC2A4/GLUT4 storage vesicles. Interacts with FMR1; this interaction occurs in association with polyribosome. Detected in melanocytes.

It catalyses the reaction ATP + H2O = ADP + phosphate + H(+). In terms of biological role, processive actin-based motor that can move in large steps approximating the 36-nm pseudo-repeat of the actin filament. Can hydrolyze ATP in the presence of actin, which is essential for its function as a motor protein. Involved in melanosome transport. Also mediates the transport of vesicles to the plasma membrane. May also be required for some polarization process involved in dendrite formation. This Homo sapiens (Human) protein is Unconventional myosin-Va (MYO5A).